The sequence spans 509 residues: Steroid 17-alpha-hydroxylase/17,20 lyase (509 aa).

Residue Cys445 participates in heme binding.

This sequence belongs to the cytochrome P450 family. The cofactor is heme.

Its subcellular location is the membrane. The enzyme catalyses a C21-steroid + reduced [NADPH--hemoprotein reductase] + O2 = a 17alpha-hydroxy-C21-steroid + oxidized [NADPH--hemoprotein reductase] + H2O + H(+). It catalyses the reaction 17alpha-hydroxyprogesterone + reduced [NADPH--hemoprotein reductase] + O2 = androst-4-ene-3,17-dione + acetate + oxidized [NADPH--hemoprotein reductase] + H2O + 2 H(+). It carries out the reaction 17alpha-hydroxypregnenolone + reduced [NADPH--hemoprotein reductase] + O2 = 3beta-hydroxyandrost-5-en-17-one + acetate + oxidized [NADPH--hemoprotein reductase] + H2O + 2 H(+). Its pathway is lipid metabolism; steroid biosynthesis. Conversion of pregnenolone and progesterone to their 17-alpha-hydroxylated products and subsequently to dehydroepiandrosterone (DHEA) and androstenedione. Catalyzes both the 17-alpha-hydroxylation and the 17,20-lyase reaction. The protein is Steroid 17-alpha-hydroxylase/17,20 lyase (CYP17A1) of Squalus acanthias (Spiny dogfish).